The primary structure comprises 131 residues: Small ribosomal subunit protein uS8 (131 aa).

The protein belongs to the universal ribosomal protein uS8 family. Part of the 30S ribosomal subunit. Contacts proteins S5 and S12.

Functionally, one of the primary rRNA binding proteins, it binds directly to 16S rRNA central domain where it helps coordinate assembly of the platform of the 30S subunit. The polypeptide is Small ribosomal subunit protein uS8 (Parabacteroides distasonis (strain ATCC 8503 / DSM 20701 / CIP 104284 / JCM 5825 / NCTC 11152)).